A 467-amino-acid polypeptide reads, in one-letter code: UDP-N-acetylmuramoylalanine--D-glutamate ligase (467 aa).

118 to 124 (GTNGKTT) is a binding site for ATP.

This sequence belongs to the MurCDEF family.

It is found in the cytoplasm. The enzyme catalyses UDP-N-acetyl-alpha-D-muramoyl-L-alanine + D-glutamate + ATP = UDP-N-acetyl-alpha-D-muramoyl-L-alanyl-D-glutamate + ADP + phosphate + H(+). It participates in cell wall biogenesis; peptidoglycan biosynthesis. Cell wall formation. Catalyzes the addition of glutamate to the nucleotide precursor UDP-N-acetylmuramoyl-L-alanine (UMA). This Streptomyces avermitilis (strain ATCC 31267 / DSM 46492 / JCM 5070 / NBRC 14893 / NCIMB 12804 / NRRL 8165 / MA-4680) protein is UDP-N-acetylmuramoylalanine--D-glutamate ligase.